The sequence spans 692 residues: Polyribonucleotide nucleotidyltransferase (692 aa).

Mg(2+) contacts are provided by aspartate 484 and aspartate 490. Positions 551–610 (PRIITIQINPDRIRDVIGPGGKVIRALTEETGATIDIQDNGTVTIASVDGEAGAAAKRRI) constitute a KH domain. Residues 620–688 (DTIYDGKVAK…RQGKIKLSMK (69 aa)) form the S1 motif domain.

Belongs to the polyribonucleotide nucleotidyltransferase family. In terms of assembly, component of the RNA degradosome, which is a multiprotein complex involved in RNA processing and mRNA degradation. Requires Mg(2+) as cofactor.

The protein localises to the cytoplasm. The enzyme catalyses RNA(n+1) + phosphate = RNA(n) + a ribonucleoside 5'-diphosphate. In terms of biological role, involved in mRNA degradation. Catalyzes the phosphorolysis of single-stranded polyribonucleotides processively in the 3'- to 5'-direction. The polypeptide is Polyribonucleotide nucleotidyltransferase (Acidithiobacillus ferrooxidans (strain ATCC 53993 / BNL-5-31) (Leptospirillum ferrooxidans (ATCC 53993))).